The primary structure comprises 578 residues: Thrombomodulin (578 aa).

The N-terminal stretch at 1–16 (MLRVLLLGVLAPAGLG) is a signal peptide. The Extracellular segment spans residues 17-518 (LPTPAQPQPR…SPSPVGPVHS (502 aa)). The C-type lectin domain occupies 31 to 167 (MEHDCFQLFR…CAAEADGFLC (137 aa)). Residue Asn114 is glycosylated (N-linked (GlcNAc...) asparagine). Intrachain disulfides connect Cys137–Cys158, Cys246–Cys257, Cys253–Cys266, Cys268–Cys281, Cys289–Cys297, Cys293–Cys309, Cys311–Cys324, Cys330–Cys341, Cys337–Cys350, Cys352–Cys363, Cys370–Cys379, Cys375–Cys389, Cys391–Cys405, Cys409–Cys414, Cys418–Cys426, Cys428–Cys440, Cys446–Cys455, Cys451–Cys464, and Cys466–Cys480. EGF-like domains lie at 242-282 (GAWD…RSCA) and 285-325 (AEHS…HRCE). N-linked (GlcNAc...) asparagine glycosylation occurs at Asn300. Positions 326–364 (DVDDCIQVPSLCPQLCVNTRGAFECHCYPGYELVDNECV) constitute an EGF-like 3; calcium-binding domain. The residue at position 343 (Asn343) is a (3R)-3-hydroxyasparagine. 2 EGF-like domains span residues 366 to 406 (PVDP…HRCQ) and 405 to 441 (CQMFCNQTACPADCDPNSPTSCQCPEGYILDDGFMCT). A glycan (N-linked (GlcNAc...) asparagine) is linked at Asn410. In terms of domain architecture, EGF-like 6; calcium-binding spans 442–481 (DIDECENGECPEACRNLPGTYECICGPDSPLAGQVATDCG). Positions 483–512 (IISDPDGDSDSGSGEPPVTPTPGVTPSPSP) are disordered. O-linked (Xyl...) (chondroitin sulfate) serine glycans are attached at residues Ser493 and Ser495. The span at 499–512 (PVTPTPGVTPSPSP) shows a compositional bias: pro residues. The helical transmembrane segment at 519–539 (GVLIGISIASLSLVVALLALL) threads the bilayer. Residues 540–578 (CHLRKKQGAPRAELEYKCGAPAKEVVLQHVRTEQMPQKL) lie on the Cytoplasmic side of the membrane.

As to quaternary structure, interacts with ITGAL, ITGAM and ITGB2. Interacts with thrombin/F2; this interaction switches the specificity of thrombin from a procoagulant to an anticoagulant and antifibrinolytic protease. Interacts with ANGP1 and ANGP2; these interactions significantly inhibit the generation of activated PC and TAFIa/CPB2 by the thrombin/thrombomodulin complex. Interacts with PF4; this interaction enhances generation of activated protein C. Interacts with HMGB1; this interaction inhibits HMGB1 inflammatory activity. In terms of processing, N-glycosylated. Post-translationally, the iron and 2-oxoglutarate dependent 3-hydroxylation of aspartate and asparagine is (R) stereospecific within EGF domains. Expressed in lung, liver, spleen, kidney, pancreas and lymph node. Low expression in heart, cerebrum, urinary bladder and uterus.

Its subcellular location is the membrane. Its function is as follows. Endothelial cell receptor that plays a critical role in regulating several physiological processes including hemostasis, coagulation, fibrinolysis, inflammation, and angiogenesis. Acts as a cofactor for thrombin activation of protein C/PROC on the surface of vascular endothelial cells leading to initiation of the activated protein C anticoagulant pathway. Also accelerates the activation of the plasma carboxypeptidase B2/CPB2, which catalyzes removal of C-terminal basic amino acids from its substrates including kinins or anaphylatoxins leading to fibrinolysis inhibition. Plays critical protective roles in changing the cleavage specificity of protease-activated receptor 1/PAR1, inhibiting endothelial cell permeability and inflammation. Suppresses inflammation distinctly from its anticoagulant cofactor activity by sequestering HMGB1 thereby preventing it from engaging cellular receptors such as RAGE and contributing to the inflammatory response. The chain is Thrombomodulin (THBD) from Canis lupus familiaris (Dog).